An 817-amino-acid chain; its full sequence is Lon protease (817 aa).

The Lon N-terminal domain occupies Leu44–Leu239. Gly390 to Thr397 is an ATP binding site. One can recognise a Lon proteolytic domain in the interval Asn626–Asp807. Active-site residues include Ser713 and Lys756.

It belongs to the peptidase S16 family. Homohexamer. Organized in a ring with a central cavity.

It is found in the cytoplasm. The enzyme catalyses Hydrolysis of proteins in presence of ATP.. Functionally, ATP-dependent serine protease that mediates the selective degradation of mutant and abnormal proteins as well as certain short-lived regulatory proteins. Required for cellular homeostasis and for survival from DNA damage and developmental changes induced by stress. Degrades polypeptides processively to yield small peptide fragments that are 5 to 10 amino acids long. Binds to DNA in a double-stranded, site-specific manner. This is Lon protease from Flavobacterium johnsoniae (strain ATCC 17061 / DSM 2064 / JCM 8514 / BCRC 14874 / CCUG 350202 / NBRC 14942 / NCIMB 11054 / UW101) (Cytophaga johnsonae).